Here is a 354-residue protein sequence, read N- to C-terminus: MFKIASSPHSHSGKLTARIMLWVILAMLPAIFAQLYYFGFGVLFQITIAVVFALCLEFLVTILRKKPKLFYISDFSVTLTALILAVAIPPYAPYWIILIGIFCAVILGKHVYGGLGQNPFNPAMVGYVVLLVSFPMQMTTWLAPVQLLHEPPTFIDAYHLIFSGGTTDGFSLHQLTASIDGMSSATPLDAVKTGLKANRGLAEINRSPLFTQSSLAGLGWFQVNLAFLLGGLFLVWKRIIHWQIPTALLITVCLFSLCSWLFSDNMPSPLWQLFSGATMFCAFFIATDPVTASITPKGKLVFGVLVGLLLCLIRFYGGYPDGAAFAILLANICVPLIDQYTRPRVTGYDLRGKN.

A run of 5 helical transmembrane segments spans residues 19–39 (IMLW…YYFG), 40–60 (FGVL…EFLV), 70–89 (FYIS…VAIP), 94–116 (YWII…GGLG), and 123–143 (AMVG…TWLA). Position 186 is an FMN phosphoryl threonine (threonine 186). The next 5 membrane-spanning stretches (helical) occupy residues 215 to 235 (LAGL…LFLV), 242 to 262 (WQIP…SWLF), 266 to 286 (MPSP…FFIA), 300 to 320 (LVFG…GGYP), and 321 to 341 (DGAA…DQYT).

This sequence belongs to the NqrB/RnfD family. As to quaternary structure, the complex is composed of six subunits: RnfA, RnfB, RnfC, RnfD, RnfE and RnfG. FMN serves as cofactor.

Its subcellular location is the cell inner membrane. Functionally, part of a membrane-bound complex that couples electron transfer with translocation of ions across the membrane. The protein is Ion-translocating oxidoreductase complex subunit D of Mannheimia succiniciproducens (strain KCTC 0769BP / MBEL55E).